The chain runs to 83 residues: Small ribosomal subunit protein bS18 (83 aa).

This sequence belongs to the bacterial ribosomal protein bS18 family. Part of the 30S ribosomal subunit. Forms a tight heterodimer with protein bS6.

Its function is as follows. Binds as a heterodimer with protein bS6 to the central domain of the 16S rRNA, where it helps stabilize the platform of the 30S subunit. The polypeptide is Small ribosomal subunit protein bS18 (Methylobacterium sp. (strain 4-46)).